The following is a 468-amino-acid chain: UDP-N-acetylmuramate--L-alanine ligase (468 aa).

121 to 127 is an ATP binding site; that stretch reads GSHGKTT.

Belongs to the MurCDEF family.

It is found in the cytoplasm. The enzyme catalyses UDP-N-acetyl-alpha-D-muramate + L-alanine + ATP = UDP-N-acetyl-alpha-D-muramoyl-L-alanine + ADP + phosphate + H(+). Its pathway is cell wall biogenesis; peptidoglycan biosynthesis. Functionally, cell wall formation. This is UDP-N-acetylmuramate--L-alanine ligase from Borreliella burgdorferi (strain ATCC 35210 / DSM 4680 / CIP 102532 / B31) (Borrelia burgdorferi).